An 82-amino-acid chain; its full sequence is RNA-binding protein Hfq (82 aa).

In terms of domain architecture, Sm spans 11–71 (DTFLNHVRKT…ISTIMPGAPI (61 aa)).

Belongs to the Hfq family. As to quaternary structure, homohexamer.

In terms of biological role, RNA chaperone that binds small regulatory RNA (sRNAs) and mRNAs to facilitate mRNA translational regulation in response to envelope stress, environmental stress and changes in metabolite concentrations. Also binds with high specificity to tRNAs. In Nitrobacter winogradskyi (strain ATCC 25391 / DSM 10237 / CIP 104748 / NCIMB 11846 / Nb-255), this protein is RNA-binding protein Hfq.